The sequence spans 935 residues: Progesterone receptor (935 aa).

Positions 1 to 50 (MTELKAKGPRAPHVAGSPSSPKVGSPLPCSQAAGPFPGSQTSDTLPEASA) are disordered. Residues 1-164 (MTELKAKGPR…PATQRVLSPL (164 aa)) are AF3; mediates transcriptional activation. A modulating, Pro-Rich region spans residues 1-568 (MTELKAKGPR…YSFESLPQKI (568 aa)). S20 is subject to Phosphoserine. The LXXL motif 1 signature appears at 55–59 (LDGLL). Residues 62–159 (RICQGQDPTD…DPPAAPATQR (98 aa)) form a disordered region. S81 bears the Phosphoserine mark. Positions 115-119 (LDTLW) match the LXXL motif 2 motif. S130 and S162 each carry phosphoserine. The interval 165-305 (MSRSGGKAGD…LATTVTDFIH (141 aa)) is mediates transcriptional transrepression. Residues 183–187 (KVLPR) carry the Nuclear localization signal motif. The tract at residues 185 to 252 (LPRGLSPSRQ…ALGGAAAGGG (68 aa)) is disordered. Phosphoserine is present on S190. The span at 191–203 (PSRQLLLPTSGSP) shows a compositional bias: polar residues. S213 carries the phosphoserine modification. Acidic residues predominate over residues 220 to 231 (EVEEEDGSESED). Over residues 232-246 (SAGPLLKGKPRALGG) the composition is skewed to low complexity. S294 is subject to Phosphoserine; by MAPK1. The segment at 331-365 (GGAGAASAFAPPRSSPSASSTPVPGGDFPDCAYAP) is disordered. Positions 335 to 356 (AASAFAPPRSSPSASSTPVPGG) are enriched in low complexity. The residue at position 345 (S345) is a Phosphoserine; by MAPK. K388 participates in a covalent cross-link: Glycyl lysine isopeptide (Lys-Gly) (interchain with G-Cter in SUMO); alternate. K388 participates in a covalent cross-link: Glycyl lysine isopeptide (Lys-Gly) (interchain with G-Cter in ubiquitin); alternate. At S400 the chain carries Phosphoserine; by CDK2. The segment at 415 to 452 (PDFPLGPPPSLPPRAPPPRPGEAAVTAAPASASVSSAS) is disordered. The span at 418–434 (PLGPPPSLPPRAPPPRP) shows a compositional bias: pro residues. A compositionally biased stretch (low complexity) spans 435–452 (GEAAVTAAPASASVSSAS). Residues 456-548 (STLECILYKA…VYPPYLNYLR (93 aa)) are AF1; mediates transcriptional activation. K533 participates in a covalent cross-link: Glycyl lysine isopeptide (Lys-Gly) (interchain with G-Cter in SUMO). NR C4-type zinc fingers lie at residues 569–589 (CLICGDEASGCHYGVLTCGSC) and 605–629 (CAGRNDCIVDKIRRKNCPACRLRKC). The segment at residues 569 to 641 (CLICGDEASG…AGMVLGGRKF (73 aa)) is a DNA-binding region (nuclear receptor). Position 678 is a phosphoserine (S678). One can recognise an NR LBD domain in the interval 681-915 (QDIQLIPPLI…EFPEMMSEVI (235 aa)). The interval 689-935 (LINLLLSIEP…MVKPLLFHKK (247 aa)) is AF2; mediates transcriptional activation.

It belongs to the nuclear hormone receptor family. Interacts with SMARD1 and UNC45A. Interacts with CUEDC2; the interaction promotes ubiquitination, decreases sumoylation, and represses transcriptional activity. Interacts with PIAS3; the interaction promotes sumoylation of PR in a hormone-dependent manner, inhibits DNA-binding, and alters nuclear export. Interacts with SP1; the interaction requires ligand-induced phosphorylation on Ser-344 by ERK1/2-MAPK. Interacts with PRMT2. Interacts with NCOA2 and NCOA1. Interacts with KLF9. Interacts with GTF2B. In terms of processing, phosphorylated on multiple serine sites. Several of these sites are hormone-dependent. Phosphorylation on Ser-294 is highly hormone-dependent and modulates ubiquitination and sumoylation on Lys-388. Phosphorylation on Ser-345 requires induction by hormone. Basal phosphorylation on Ser-81, Ser-162, Ser-190 and Ser-400 is increased in response to progesterone and can be phosphorylated in vitro by the CDK2-A1 complex. Increased levels of phosphorylation on Ser-400 also in the presence of EGF, heregulin, IGF, PMA and FBS. Phosphorylation at this site by CDK2 is ligand-independent, and increases nuclear translocation and transcriptional activity. Phosphorylation at Ser-162 and Ser-294, but not at Ser-190, is impaired during the G(2)/M phase of the cell cycle. Phosphorylation on Ser-345 by ERK1/2 MAPK is required for interaction with SP1. Sumoylation is hormone-dependent and represses transcriptional activity. Sumoylation on all three sites is enhanced by PIAS3. Desumoylated by SENP1. Sumoylation on Lys-388, the main site of sumoylation, is repressed by ubiquitination on the same site, and modulated by phosphorylation at Ser-294. Post-translationally, ubiquitination is hormone-dependent and represses sumoylation on the same site. Promoted by MAPK-mediated phosphorylation on Ser-294. In terms of processing, palmitoylated by ZDHHC7 and ZDHHC21. Palmitoylation is required for plasma membrane targeting and for rapid intracellular signaling via ERK and AKT kinases and cAMP generation.

It localises to the nucleus. The protein resides in the cytoplasm. In terms of biological role, the steroid hormones and their receptors are involved in the regulation of eukaryotic gene expression and affect cellular proliferation and differentiation in target tissues. Transcriptional activator of several progesteron-dependent promoters in a variety of cell types. Involved in activation of SRC-dependent MAPK signaling on hormone stimulation. The chain is Progesterone receptor (PGR) from Pithecia irrorata (Gray monk saki).